Here is a 228-residue protein sequence, read N- to C-terminus: Somatolactin (228 aa).

Positions 1-24 (MFSIRMNKVLQGFVCLMLTHRIVG) are cleaved as a signal peptide. Disulfide bonds link Cys-29-Cys-38, Cys-88-Cys-200, and Cys-217-Cys-225. 2 N-linked (GlcNAc...) asparagine glycosylation sites follow: Asn-141 and Asn-177.

Belongs to the somatotropin/prolactin family.

It localises to the secreted. This chain is Somatolactin, found in Anguilla anguilla (European freshwater eel).